The primary structure comprises 410 residues: Lipoyl synthase, mitochondrial (410 aa).

Residues Cys-125, Cys-130, Cys-136, Cys-157, Cys-161, Cys-164, and Ser-373 each coordinate [4Fe-4S] cluster. One can recognise a Radical SAM core domain in the interval Ser-140–Leu-362.

Belongs to the radical SAM superfamily. Lipoyl synthase family. [4Fe-4S] cluster is required as a cofactor.

The protein localises to the mitochondrion. The enzyme catalyses [[Fe-S] cluster scaffold protein carrying a second [4Fe-4S](2+) cluster] + N(6)-octanoyl-L-lysyl-[protein] + 2 oxidized [2Fe-2S]-[ferredoxin] + 2 S-adenosyl-L-methionine + 4 H(+) = [[Fe-S] cluster scaffold protein] + N(6)-[(R)-dihydrolipoyl]-L-lysyl-[protein] + 4 Fe(3+) + 2 hydrogen sulfide + 2 5'-deoxyadenosine + 2 L-methionine + 2 reduced [2Fe-2S]-[ferredoxin]. It functions in the pathway protein modification; protein lipoylation via endogenous pathway; protein N(6)-(lipoyl)lysine from octanoyl-[acyl-carrier-protein]: step 2/2. Catalyzes the radical-mediated insertion of two sulfur atoms into the C-6 and C-8 positions of the octanoyl moiety bound to the lipoyl domains of lipoate-dependent enzymes, thereby converting the octanoylated domains into lipoylated derivatives. This is Lipoyl synthase, mitochondrial from Leishmania major.